A 1598-amino-acid polypeptide reads, in one-letter code: Serine/threonine-protein kinase Nek1 (1598 aa).

The 275-residue stretch at 106–380 (YEVIRQIGAG…ALQCLGYTIF (275 aa)) folds into the Protein kinase domain. ATP is bound by residues 112-120 (IGAGRFGEV) and Lys-135. Asp-240 (proton acceptor) is an active-site residue.

It belongs to the protein kinase superfamily. NEK Ser/Thr protein kinase family. NIMA subfamily.

The protein localises to the cytoplasm. It is found in the cytoskeleton. The protein resides in the microtubule organizing center. It localises to the centrosome. Its subcellular location is the spindle pole. It catalyses the reaction L-seryl-[protein] + ATP = O-phospho-L-seryl-[protein] + ADP + H(+). It carries out the reaction L-threonyl-[protein] + ATP = O-phospho-L-threonyl-[protein] + ADP + H(+). Its activity is regulated as follows. Phosphorylation status of the T-loop (amino acids 267-293) modulates kinase activity and subcellular localization of the protein. Its function is as follows. Probable serine/threonine-protein kinase. Involved in controlling centrosome splitting. Promotes separation of the centrosome outer cores. The sequence is that of Serine/threonine-protein kinase Nek1 from Toxoplasma gondii (strain ATCC 50611 / Me49).